A 256-amino-acid chain; its full sequence is ATP synthase peripheral stalk subunit b, mitochondrial (256 aa).

A mitochondrion-targeting transit peptide spans 1–42 (MLSRVVLSAAATAAPCLKNAAVLGPGVLQATRVFHTGQPRLA). At Lys131 the chain carries N6-succinyllysine. 6 positions are modified to N6-acetyllysine: Lys139, Lys154, Lys162, Lys221, Lys233, and Lys244.

Belongs to the eukaryotic ATPase B chain family. As to quaternary structure, component of the ATP synthase complex composed at least of ATP5F1A/subunit alpha, ATP5F1B/subunit beta, ATP5MC1/subunit c (homooctomer), MT-ATP6/subunit a, MT-ATP8/subunit 8, ATP5ME/subunit e, ATP5MF/subunit f, ATP5MG/subunit g, ATP5MK/subunit k, ATP5MJ/subunit j, ATP5F1C/subunit gamma, ATP5F1D/subunit delta, ATP5F1E/subunit epsilon, ATP5PF/subunit F6, ATP5PB/subunit b, ATP5PD/subunit d, ATP5PO/subunit OSCP. ATP synthase complex consists of a soluble F(1) head domain (subunits alpha(3) and beta(3)) - the catalytic core - and a membrane F(0) domain - the membrane proton channel (subunits c, a, 8, e, f, g, k and j). These two domains are linked by a central stalk (subunits gamma, delta, and epsilon) rotating inside the F1 region and a stationary peripheral stalk (subunits F6, b, d, and OSCP).

Its subcellular location is the mitochondrion. It is found in the mitochondrion inner membrane. Its function is as follows. Subunit b, of the mitochondrial membrane ATP synthase complex (F(1)F(0) ATP synthase or Complex V) that produces ATP from ADP in the presence of a proton gradient across the membrane which is generated by electron transport complexes of the respiratory chain. ATP synthase complex consist of a soluble F(1) head domain - the catalytic core - and a membrane F(1) domain - the membrane proton channel. These two domains are linked by a central stalk rotating inside the F(1) region and a stationary peripheral stalk. During catalysis, ATP synthesis in the catalytic domain of F(1) is coupled via a rotary mechanism of the central stalk subunits to proton translocation. In vivo, can only synthesize ATP although its ATP hydrolase activity can be activated artificially in vitro. Part of the complex F(0) domain. Part of the complex F(0) domain and the peripheric stalk, which acts as a stator to hold the catalytic alpha(3)beta(3) subcomplex and subunit a/ATP6 static relative to the rotary elements. This is ATP synthase peripheral stalk subunit b, mitochondrial from Rattus norvegicus (Rat).